The primary structure comprises 177 residues: Probetacellulin (177 aa).

The signal sequence occupies residues 1–31; that stretch reads MDPTAPGSSVSSLPLLLVLALGLAILHCVVA. The Extracellular segment spans residues 32 to 118; the sequence is DGNTTRTPET…LFYLQQDRGQ (87 aa). 3 N-linked (GlcNAc...) asparagine glycosylation sites follow: N34, N42, and N52. Positions 65–105 constitute an EGF-like domain; the sequence is HFSRCPKQYKHYCIHGRCRFVVDEQTPSCICEKGYFGARCE. Intrachain disulfides connect C69/C82, C77/C93, and C95/C104. A propeptide spans 112–177 (removed in mature form); the sequence is LQQDRGQILV…SEDIQETNIA (66 aa). Residues 119–139 traverse the membrane as a helical segment; sequence ILVVCLIVVMVVFIILVIGVC. Over 140–177 the chain is Cytoplasmic; it reads TCCHPLRKHRKKKKEEKMETLDKDKTPISEDIQETNIA. Positions 153-177 are disordered; that stretch reads KEEKMETLDKDKTPISEDIQETNIA. Residues 154 to 167 show a composition bias toward basic and acidic residues; that stretch reads EEKMETLDKDKTPI.

Monomer. Interacts with EGFR and ERBB4. Found in several mouse tissues including kidney, uterus and liver, as well as in beta tumor cell line and MCF-7 cells. It is not detected in the brain.

The protein localises to the secreted. It localises to the extracellular space. The protein resides in the cell membrane. Growth factor that binds to EGFR, ERBB4 and other EGF receptor family members. Potent mitogen for retinal pigment epithelial cells and vascular smooth muscle cells. The protein is Probetacellulin (Btc) of Mus musculus (Mouse).